A 304-amino-acid chain; its full sequence is UDP-N-acetylenolpyruvoylglucosamine reductase (304 aa).

The FAD-binding PCMH-type domain maps to 33-198 (RVGGPVDILL…ITATFCFESG (166 aa)). Arg177 is an active-site residue. Ser227 functions as the Proton donor in the catalytic mechanism. The active site involves Glu297.

Belongs to the MurB family. FAD serves as cofactor.

Its subcellular location is the cytoplasm. The catalysed reaction is UDP-N-acetyl-alpha-D-muramate + NADP(+) = UDP-N-acetyl-3-O-(1-carboxyvinyl)-alpha-D-glucosamine + NADPH + H(+). It functions in the pathway cell wall biogenesis; peptidoglycan biosynthesis. In terms of biological role, cell wall formation. The chain is UDP-N-acetylenolpyruvoylglucosamine reductase from Clostridium botulinum (strain Alaska E43 / Type E3).